A 131-amino-acid polypeptide reads, in one-letter code: D-ribose pyranase (131 aa).

H20 acts as the Proton donor in catalysis. Residues D28, H98, and 120–122 contribute to the substrate site; that span reads YAN.

This sequence belongs to the RbsD / FucU family. RbsD subfamily. As to quaternary structure, homodecamer.

Its subcellular location is the cytoplasm. It carries out the reaction beta-D-ribopyranose = beta-D-ribofuranose. It participates in carbohydrate metabolism; D-ribose degradation; D-ribose 5-phosphate from beta-D-ribopyranose: step 1/2. Catalyzes the interconversion of beta-pyran and beta-furan forms of D-ribose. The protein is D-ribose pyranase of Bacillus cereus (strain ATCC 10987 / NRS 248).